Here is a 649-residue protein sequence, read N- to C-terminus: Transcription factor E2-alpha (649 aa).

Disordered regions lie at residues 37 to 107 (RPAS…SERN), 132 to 207 (GLSS…AKTP), 296 to 325 (TYSG…SSSG), and 339 to 376 (DHSS…ALSP). Residues 57–71 (SESWGNSEQNSSSFD) are compositionally biased toward polar residues. A compositionally biased stretch (low complexity) spans 132 to 148 (GLSSPGPLSPSGVKSSS). Residues Ser-135 and Ser-140 each carry the phosphoserine modification. Residues 171-177 (PKKVRKV) carry the Nuclear localization signal motif. The segment covering 339–352 (DHSSNNFSPSPSTP) has biased composition (low complexity). Residue Thr-351 is modified to Phosphothreonine. At Ser-355 the chain carries Phosphoserine. At Arg-367 the chain carries Omega-N-methylarginine. Ser-375 is modified (phosphoserine). A leucine-zipper region spans residues 385–420 (LSKMEDRLDEAIHVLRSHAVGTASELHGLLPGHSTL). The interval 435–547 (AGLVSGSHPE…KAEREKERRV (113 aa)) is disordered. Positions 459–477 (SLPSQPSSLPDLSQRPPDS) are enriched in low complexity. Residue Lys-494 forms a Glycyl lysine isopeptide (Lys-Gly) (interchain with G-Cter in SUMO2) linkage. Phosphoserine is present on Ser-524. Asp-526 carries the phosphothreonine modification. Residues 537-547 (QKAEREKERRV) are compositionally biased toward basic and acidic residues. Residues 544–597 (ERRVANNARERLRVRDINEAFKELGRMCQLHLSTEKPQTKLLILHQAVAVILSL) enclose the bHLH domain. Lys-620 is covalently cross-linked (Glycyl lysine isopeptide (Lys-Gly) (interchain with G-Cter in SUMO2)).

In terms of assembly, homodimer. Heterodimer; efficient DNA binding requires dimerization with another bHLH protein. Forms a heterodimer with TWIST1 and TWIST2. Forms a heterodimer with NEUROD1; the heterodimer is inhibited in presence of ID2, but not NR0B2, to E-box element. Forms a heterodimer with TCF15; the heterodimer binds E-box element. Forms a heterodimer with MYOG; heterodimerization enhances MYOG DNA-binding and transcriptional activities. Forms a heterodimer with ATOH8; repress transcription of TCF3 and TCF3-NEUROG3 dimer-induced transactivation of E box-dependent promoters. Component of a nuclear TAL-1 complex composed at least of CBFA2T3, LDB1, TAL1 and TCF3. Interacts with NEUROD2. Interacts with EP300. Interacts with PTF1A, TGFB1I1. Interacts with UBE2I. Interacts with BHLHA9. Interacts with ASB2; the interaction is mediated by SKP2 and targets TCF3 for Notch-induced proteasomal degradation. Interacts with transcription factor ASCL5/AmeloD. Interacts with RALGAPA1. Interacts with FIGLA. As to quaternary structure, forms a heterodimer with ATOH7; required for ATOH7 DNA-binding. Phosphorylated following NGF stimulation. Post-translationally, undergoes Notch-induced ubiquitination and subsequent proteasomal degradation which is mediated by ASB1 or ASB2, the substrate-recognition components of probable ECS E3 ubiquitin-protein ligase complexes.

Its subcellular location is the nucleus. Its function is as follows. Transcriptional regulator involved in the initiation of neuronal differentiation and mesenchymal to epithelial transition. Heterodimers between TCF3 and tissue-specific basic helix-loop-helix (bHLH) proteins play major roles in determining tissue-specific cell fate during embryogenesis, like muscle or early B-cell differentiation. Together with TCF15, required for the mesenchymal to epithelial transition. Dimers bind DNA on E-box motifs: 5'-CANNTG-3'. Binds to the kappa-E2 site in the kappa immunoglobulin gene enhancer. Binds to the consensus sequence CAC/GCTGT/C present, in the chymotrypsin, insulin, AP-4, and several other gene enhancer motifs. Facilitates ATOH7 binding to DNA at the consensus sequence 5'-CAGGTG-3', and positively regulates transcriptional activity. The protein is Transcription factor E2-alpha (Tcf3) of Rattus norvegicus (Rat).